Here is a 1019-residue protein sequence, read N- to C-terminus: MGSKRGISSRHHSLSSYEIMFAALFAILVVLCAGLIAVSCLTIKESQRGAALGQSHEARATFKITSGVTYNPNLQDKLSVDFKVLAFDLQQMIDEIFLSSNLKNEYKNSRVLQFENGSIIVVFDLFFAQWVSDENVKEELIQGLEANKSSQLVTFHIDLNSVDILDKLTTTSHLATPGNVSIECLPGSSPCTDALTCIKADLFCDGEVNCPDGSDEDNKMCATVCDGRFLLTGSSGSFQATHYPKPSETSVVCQWIIRVNQGLSIKLSFDDFNTYYTDILDIYEGVGSSKILRASIWETNPGTIRIFSNQVTATFLIESDESDYVGFNATYTAFNSSELNNYEKINCNFEDGFCFWVQDLNDDNEWERIQGSTFSPFTGPNFDHTFGNASGFYISTPTGPGGRQERVGLLSLPLDPTLEPACLSFWYHMYGENVHKLSINISNDQNMEKTVFQKEGNYGDNWNYGQVTLNETVKFKVAFNAFKNKILSDIALDDISLTYGICNGSLYPEPTLVPTPPPELPTDCGGPFELWEPNTTFSSTNFPNSYPNLAFCVWILNAQKGKNIQLHFQEFDLENINDVVEIRDGEEADSLLLAVYTGPGPVKDVFSTTNRMTVLLITNDVLARGGFKANFTTGYHLGIPEPCKADHFQCKNGECVPLVNLCDGHLHCEDGSDEADCVRFFNGTTNNNGLVRFRIQSIWHTACAENWTTQISNDVCQLLGLGSGNSSKPIFPTDGGPFVKLNTAPDGHLILTPSQQCLQDSLIRLQCNHKSCGKKLAAQDITPKIVGGSNAKEGAWPWVVGLYYGGRLLCGASLVSSDWLVSAAHCVYGRNLEPSKWTAILGLHMKSNLTSPQTVPRLIDEIVINPHYNRRRKDNDIAMMHLEFKVNYTDYIQPICLPEENQVFPPGRNCSIAGWGTVVYQGTTANILQEADVPLLSNERCQQQMPEYNITENMICAGYEEGGIDSCQGDSGGPLMCQENNRWFLAGVTSFGYKCALPNRPGVYARVSRFTEWIQSFLH.

Residue Gly-2 is the site of N-myristoyl glycine attachment. The Cytoplasmic segment spans residues 2-18; it reads GSKRGISSRHHSLSSYE. The helical; Signal-anchor for type II membrane protein transmembrane segment at 19–47 threads the bilayer; it reads IMFAALFAILVVLCAGLIAVSCLTIKESQ. The Extracellular portion of the chain corresponds to 48-1019; it reads RGAALGQSHE…FTEWIQSFLH (972 aa). Positions 54 to 169 constitute an SEA domain; that stretch reads QSHEARATFK…NSVDILDKLT (116 aa). Residues Asn-116, Asn-147, and Asn-179 are each glycosylated (N-linked (GlcNAc...) asparagine). Residues 182 to 223 form the LDL-receptor class A 1 domain; the sequence is IECLPGSSPCTDALTCIKADLFCDGEVNCPDGSDEDNKMCAT. 4 disulfide bridges follow: Cys-184–Cys-197, Cys-191–Cys-210, Cys-204–Cys-221, and Cys-225–Cys-253. The CUB 1 domain maps to 225–334; the sequence is CDGRFLLTGS…VGFNATYTAF (110 aa). N-linked (GlcNAc...) asparagine glycosylation is found at Asn-328, Asn-335, Asn-388, Asn-440, Asn-470, Asn-503, Asn-534, and Asn-630. The MAM domain maps to 342 to 504; the sequence is YEKINCNFED…ISLTYGICNG (163 aa). Cys-524 and Cys-552 form a disulfide bridge. The CUB 2 domain maps to 524 to 634; the sequence is CGGPFELWEP…GGFKANFTTG (111 aa). Positions 641 to 679 constitute an LDL-receptor class A 2 domain; it reads EPCKADHFQCKNGECVPLVNLCDGHLHCEDGSDEADCVR. Disulfide bonds link Cys-643–Cys-655, Cys-650–Cys-668, and Cys-662–Cys-677. The 94-residue stretch at 678 to 771 folds into the SRCR domain; the sequence is VRFFNGTTNN…LIRLQCNHKS (94 aa). 3 N-linked (GlcNAc...) asparagine glycosylation sites follow: Asn-682, Asn-706, and Asn-725. 3 disulfide bridges follow: Cys-757–Cys-767, Cys-772–Cys-896, and Cys-810–Cys-826. Residues 785–1019 enclose the Peptidase S1 domain; sequence IVGGSNAKEG…FTEWIQSFLH (235 aa). Residue His-825 is the Charge relay system of the active site. Asn-848 carries an N-linked (GlcNAc...) asparagine glycan. The active-site Charge relay system is Asp-876. 3 N-linked (GlcNAc...) asparagine glycosylation sites follow: Asn-887, Asn-909, and Asn-949. 3 disulfides stabilise this stretch: Cys-910-Cys-977, Cys-941-Cys-956, and Cys-967-Cys-995. The active-site Charge relay system is the Ser-971.

It belongs to the peptidase S1 family. As to quaternary structure, heterodimer of a catalytic (light) chain and a multidomain (heavy) chain linked by a disulfide bond. The chains are derived from a single precursor that is cleaved by a trypsin-like protease. In terms of tissue distribution, intestinal brush border.

The protein resides in the membrane. The enzyme catalyses Activation of trypsinogen by selective cleavage of 6-Lys-|-Ile-7 bond.. In terms of biological role, responsible for initiating activation of pancreatic proteolytic proenzymes (trypsin, chymotrypsin and carboxypeptidase A). It catalyzes the conversion of trypsinogen to trypsin which in turn activates other proenzymes including chymotrypsinogen, procarboxypeptidases, and proelastases. In Homo sapiens (Human), this protein is Enteropeptidase (TMPRSS15).